We begin with the raw amino-acid sequence, 138 residues long: Cysteine desulfuration protein SufE (138 aa).

Cys51 acts as the Cysteine persulfide intermediate in catalysis.

This sequence belongs to the SufE family. As to quaternary structure, homodimer. Interacts with SufS.

Its subcellular location is the cytoplasm. It participates in cofactor biosynthesis; iron-sulfur cluster biosynthesis. Participates in cysteine desulfuration mediated by SufS. Cysteine desulfuration mobilizes sulfur from L-cysteine to yield L-alanine and constitutes an essential step in sulfur metabolism for biosynthesis of a variety of sulfur-containing biomolecules. Functions as a sulfur acceptor for SufS, by mediating the direct transfer of the sulfur atom from the S-sulfanylcysteine of SufS, an intermediate product of cysteine desulfuration process. The polypeptide is Cysteine desulfuration protein SufE (Photorhabdus laumondii subsp. laumondii (strain DSM 15139 / CIP 105565 / TT01) (Photorhabdus luminescens subsp. laumondii)).